A 1342-amino-acid chain; its full sequence is DNA-directed RNA polymerase subunit beta (1342 aa).

Belongs to the RNA polymerase beta chain family. The RNAP catalytic core consists of 2 alpha, 1 beta, 1 beta' and 1 omega subunit. When a sigma factor is associated with the core the holoenzyme is formed, which can initiate transcription.

The catalysed reaction is RNA(n) + a ribonucleoside 5'-triphosphate = RNA(n+1) + diphosphate. DNA-dependent RNA polymerase catalyzes the transcription of DNA into RNA using the four ribonucleoside triphosphates as substrates. This is DNA-directed RNA polymerase subunit beta from Tolumonas auensis (strain DSM 9187 / NBRC 110442 / TA 4).